We begin with the raw amino-acid sequence, 1403 residues long: Protein FAM135B (1403 aa).

Disordered regions lie at residues 445–483 (EKNL…EVQE), 514–548 (EDEC…GQTP), 648–669 (REAL…DLSA), and 718–740 (RHAH…LPSG). The segment covering 649–661 (EALDTKPSQPDHA) has biased composition (basic and acidic residues). Polar residues predominate over residues 731–740 (TESNTSLPSG). A phosphoserine mark is found at Ser775 and Ser776. The disordered stretch occupies residues 790-819 (TAGFSEDLDPSSKENSPPRHTSLSYGGSRV). The segment covering 802 to 814 (KENSPPRHTSLSY) has biased composition (polar residues).

This sequence belongs to the FAM135 family.

This is Protein FAM135B (Fam135b) from Mus musculus (Mouse).